A 343-amino-acid polypeptide reads, in one-letter code: Annexin A1 isoform p37 (343 aa).

Gln19 is covalently cross-linked (Isoglutamyl lysine isopeptide (Gln-Lys) (interchain with K-?)). Tyr21 is modified (phosphotyrosine; by EGFR; in vitro). Position 24 is a phosphoserine; by PKC; in vitro (Ser24). Annexin repeat units lie at residues 38–109 (FDPS…ALLK), 110–181 (TPAQ…VLAK), 193–265 (DLAD…ALVK), and 269–340 (SKPA…ALCG).

It belongs to the annexin family. Post-translationally, phosphorylated by protein kinase C and epidermal growth factor receptor/kinase. The N-terminus is blocked.

It is found in the nucleus. The protein localises to the cytoplasm. It localises to the cell projection. Its subcellular location is the cilium. The protein resides in the basolateral cell membrane. Its function is as follows. Calcium/phospholipid-binding protein which promotes membrane fusion and is involved in exocytosis. This protein regulates phospholipase A2 activity. It seems to bind from two to four calcium ions with high affinity. The protein is Annexin A1 isoform p37 (CP37) of Columba livia (Rock dove).